A 248-amino-acid polypeptide reads, in one-letter code: Short-chain dehydrogenase/reductase iacG (248 aa).

NADP(+)-binding residues include Ile14, Asn35, Lys41, Asp58, Arg120, and Val187.

It belongs to the short-chain dehydrogenases/reductases (SDR) family.

It functions in the pathway secondary metabolite biosynthesis. Short-chain dehydrogenase/reductase; part of the gene cluster that mediates the biosynthesis of iso-A82775C, a enylepoxycyclohexane and biosynthetic precursor of the chloropestolide anticancer natural products. Within the cluster, the prenyltransferase iacE prenylates siccayne to generate pestalodiol E, using dimethylallyl diphosphate (DMAPP) as cosubstrate. The probable oxidoreductase iacF is then involved in the epoxidation of pestalodiol F to pestalodiol F, which is further converted to pestalofone A by the short-chain dehydrogenase/reductase iacG. Iso-A82775C is subsequently generated from pestalofone A by the short-chain dehydrogenase/reductase iacC. Iso-A82775C is further condensed with maldoxin via a Diels-Alder reaction to produce the anticancer natural products chloropestolides A to E. The chain is Short-chain dehydrogenase/reductase iacG from Pestalotiopsis fici (strain W106-1 / CGMCC3.15140).